A 109-amino-acid polypeptide reads, in one-letter code: Thiosulfate sulfurtransferase GlpE (109 aa).

Residues 16–104 (REQGAVVVDI…WRSTYPAETA (89 aa)) form the Rhodanese domain. C64 (cysteine persulfide intermediate) is an active-site residue.

Belongs to the GlpE family.

The protein localises to the cytoplasm. The enzyme catalyses thiosulfate + hydrogen cyanide = thiocyanate + sulfite + 2 H(+). It catalyses the reaction thiosulfate + [thioredoxin]-dithiol = [thioredoxin]-disulfide + hydrogen sulfide + sulfite + 2 H(+). Functionally, transferase that catalyzes the transfer of sulfur from thiosulfate to thiophilic acceptors such as cyanide or dithiols. May function in a CysM-independent thiosulfate assimilation pathway by catalyzing the conversion of thiosulfate to sulfite, which can then be used for L-cysteine biosynthesis. This Pseudomonas fluorescens (strain ATCC BAA-477 / NRRL B-23932 / Pf-5) protein is Thiosulfate sulfurtransferase GlpE.